The following is a 228-amino-acid chain: Response regulator MprA (228 aa).

The Response regulatory domain occupies 2–116 (RILVVDDDRA…ELLARMRALL (115 aa)). Position 46 is a 4-aspartylphosphate (aspartate 46). Residues 127–225 (SVAMTFSDLT…VRGVGYVLRE (99 aa)) constitute a DNA-binding region (ompR/PhoB-type).

Post-translationally, phosphorylated and dephosphorylated by MprB.

Its subcellular location is the cytoplasm. Its function is as follows. Member of the two-component regulatory system MprB/MprA which contributes to maintaining a balance among several systems involved in stress resistance and is required for establishment and maintenance of persistent infection in the host. Functions as a transcriptional regulator that recognizes a 19-bp nucleotide motif comprizing two loosely conserved 8-bp direct DNA-binding motif repeats separated by a 3-bp spacer region. In Mycobacterium avium (strain 104), this protein is Response regulator MprA (mprA).